A 252-amino-acid chain; its full sequence is dITP/XTP pyrophosphatase (252 aa).

A substrate-binding site is contributed by 7–12 (THNEGK). The active-site Proton acceptor is aspartate 74. A Mg(2+)-binding site is contributed by aspartate 74. Substrate contacts are provided by residues serine 75 and 193-196 (FGYD). The tract at residues 202–229 (DDQPAGRVSTEPDHEGEPLTSAEMTPAE) is disordered. Residues lysine 230 and 235 to 236 (HR) each bind substrate.

Belongs to the HAM1 NTPase family. As to quaternary structure, homodimer. It depends on Mg(2+) as a cofactor.

It catalyses the reaction XTP + H2O = XMP + diphosphate + H(+). The enzyme catalyses dITP + H2O = dIMP + diphosphate + H(+). The catalysed reaction is ITP + H2O = IMP + diphosphate + H(+). Pyrophosphatase that catalyzes the hydrolysis of nucleoside triphosphates to their monophosphate derivatives, with a high preference for the non-canonical purine nucleotides XTP (xanthosine triphosphate), dITP (deoxyinosine triphosphate) and ITP. Seems to function as a house-cleaning enzyme that removes non-canonical purine nucleotides from the nucleotide pool, thus preventing their incorporation into DNA/RNA and avoiding chromosomal lesions. This is dITP/XTP pyrophosphatase from Bifidobacterium longum (strain DJO10A).